We begin with the raw amino-acid sequence, 59 residues long: Single-pass membrane and coiled-coil domain-containing protein 4 (59 aa).

The interval 1 to 23 (MRQLKGKPKKETSKDKKERKQAM) is disordered. Residues 9 to 22 (KKETSKDKKERKQA) are compositionally biased toward basic and acidic residues. A coiled-coil region spans residues 9-31 (KKETSKDKKERKQAMQEARQQIT). The chain crosses the membrane as a helical span at residues 32–52 (TVVLPTLAVVVALIVVFVYVA).

Belongs to the SMCO4 family.

The protein localises to the membrane. The polypeptide is Single-pass membrane and coiled-coil domain-containing protein 4 (smco4) (Xenopus laevis (African clawed frog)).